The following is a 315-amino-acid chain: Ribosomal RNA small subunit methyltransferase H (315 aa).

Residues 37–39, aspartate 57, phenylalanine 83, aspartate 105, and glutamine 112 contribute to the S-adenosyl-L-methionine site; that span reads GGH.

The protein belongs to the methyltransferase superfamily. RsmH family.

It localises to the cytoplasm. It carries out the reaction cytidine(1402) in 16S rRNA + S-adenosyl-L-methionine = N(4)-methylcytidine(1402) in 16S rRNA + S-adenosyl-L-homocysteine + H(+). Functionally, specifically methylates the N4 position of cytidine in position 1402 (C1402) of 16S rRNA. The chain is Ribosomal RNA small subunit methyltransferase H from Pseudomonas fluorescens (strain SBW25).